A 207-amino-acid polypeptide reads, in one-letter code: Large ribosomal subunit protein uL4 (207 aa).

The segment at 50–76 (KTKTVSEVSGTTKKPFKQKGTGNARQG) is disordered.

The protein belongs to the universal ribosomal protein uL4 family. In terms of assembly, part of the 50S ribosomal subunit.

In terms of biological role, one of the primary rRNA binding proteins, this protein initially binds near the 5'-end of the 23S rRNA. It is important during the early stages of 50S assembly. It makes multiple contacts with different domains of the 23S rRNA in the assembled 50S subunit and ribosome. Its function is as follows. Forms part of the polypeptide exit tunnel. The protein is Large ribosomal subunit protein uL4 of Rickettsia typhi (strain ATCC VR-144 / Wilmington).